The chain runs to 137 residues: MLQPKRTKYRKMHKGRNCGLSWNANVVSFGQYGLRATAHGQLTARQIEAARRSISRYVKRGGKLLIRVFPDKPITKKPIEVRMGSGKGNVEYWVAQIQPGRMIYEIEGVSEDVAREAFRLAASKLSVTTAFVVRTVR.

It belongs to the universal ribosomal protein uL16 family. In terms of assembly, part of the 50S ribosomal subunit.

In terms of biological role, binds 23S rRNA and is also seen to make contacts with the A and possibly P site tRNAs. This Xylella fastidiosa (strain M23) protein is Large ribosomal subunit protein uL16.